A 121-amino-acid chain; its full sequence is Small ribosomal subunit protein uS13 (121 aa).

The interval 95 to 121 (GLPVRGQKTKTNARTRKGKRKTVGAKS) is disordered.

It belongs to the universal ribosomal protein uS13 family. In terms of assembly, part of the 30S ribosomal subunit. Forms a loose heterodimer with protein S19. Forms two bridges to the 50S subunit in the 70S ribosome.

In terms of biological role, located at the top of the head of the 30S subunit, it contacts several helices of the 16S rRNA. In the 70S ribosome it contacts the 23S rRNA (bridge B1a) and protein L5 of the 50S subunit (bridge B1b), connecting the 2 subunits; these bridges are implicated in subunit movement. Contacts the tRNAs in the A and P-sites. In Campylobacter jejuni subsp. jejuni serotype O:6 (strain 81116 / NCTC 11828), this protein is Small ribosomal subunit protein uS13.